Here is a 428-residue protein sequence, read N- to C-terminus: Arginine biosynthesis bifunctional protein ArgJ, mitochondrial (428 aa).

Substrate contacts are provided by Thr171, Lys197, Thr208, Glu294, Asn423, and Ser428. The active-site Nucleophile is the Thr208.

This sequence belongs to the ArgJ family. As to quaternary structure, heterodimer of an alpha and a beta chain. In terms of processing, the alpha and beta chains are autoproteolytically processed from a single precursor protein within the mitochondrion.

The protein resides in the mitochondrion matrix. The enzyme catalyses N(2)-acetyl-L-ornithine + L-glutamate = N-acetyl-L-glutamate + L-ornithine. It carries out the reaction L-glutamate + acetyl-CoA = N-acetyl-L-glutamate + CoA + H(+). Its pathway is amino-acid biosynthesis; L-arginine biosynthesis; L-ornithine and N-acetyl-L-glutamate from L-glutamate and N(2)-acetyl-L-ornithine (cyclic): step 1/1. The protein operates within amino-acid biosynthesis; L-arginine biosynthesis; N(2)-acetyl-L-ornithine from L-glutamate: step 1/4. Functionally, catalyzes two activities which are involved in the cyclic version of arginine biosynthesis: the synthesis of acetylglutamate from glutamate and acetyl-CoA, and of ornithine by transacetylation between acetylornithine and glutamate. This is Arginine biosynthesis bifunctional protein ArgJ, mitochondrial from Komagataella phaffii (strain GS115 / ATCC 20864) (Yeast).